We begin with the raw amino-acid sequence, 424 residues long: Gamma-glutamyl phosphate reductase (424 aa).

This sequence belongs to the gamma-glutamyl phosphate reductase family.

Its subcellular location is the cytoplasm. The enzyme catalyses L-glutamate 5-semialdehyde + phosphate + NADP(+) = L-glutamyl 5-phosphate + NADPH + H(+). The protein operates within amino-acid biosynthesis; L-proline biosynthesis; L-glutamate 5-semialdehyde from L-glutamate: step 2/2. Functionally, catalyzes the NADPH-dependent reduction of L-glutamate 5-phosphate into L-glutamate 5-semialdehyde and phosphate. The product spontaneously undergoes cyclization to form 1-pyrroline-5-carboxylate. This chain is Gamma-glutamyl phosphate reductase, found in Dehalococcoides mccartyi (strain ATCC BAA-2266 / KCTC 15142 / 195) (Dehalococcoides ethenogenes (strain 195)).